Here is a 496-residue protein sequence, read N- to C-terminus: MQISLYQKNLADWTGSIIAVGLLEGQIQEQLSLLEEICDYDSLLTHVEEKDFSAKAGELIKLEILGKSLEKIILIGLGKPEALSIDDLREGAALASRASIGSKGKIGILFPWEPFNPISASKAVAEAMRLSIFKDLRFQSEPKPQNNPQSIDLIGLPESNHNIIKEVDPICSGVELARELVAAPPNELTPAALAEKAVEIAKKFKWNYKILNRKECEKEGMGAYLAVSQGSDLEPQFIHLTYKPNGQIKRRIAMVGKGLTFDSGGYNLKVGASQIEMMKYDMGGSAAVIGAARAIGELAPVDTEVHFIVAACENMVNGSAVHPGDIIKASNGTTIEINNTDAEGRLTLADALIYACKLEPDAIVDLATLTGACVIALGEEIAGLWVESDELANELKDASSACGEKLWRMPLQASYKEGLKSMLADIKNTGPRSGGSITAALFLKEFISNGIKWAHIDIAGTCWTDKDRGIDPAGATGFGVRTLVNWACKSNPDIEK.

Mn(2+)-binding residues include Lys-257 and Asp-262. Lys-269 is an active-site residue. Residues Asp-281, Asp-341, and Glu-343 each coordinate Mn(2+). Arg-345 is an active-site residue.

The protein belongs to the peptidase M17 family. The cofactor is Mn(2+).

It localises to the cytoplasm. It catalyses the reaction Release of an N-terminal amino acid, Xaa-|-Yaa-, in which Xaa is preferably Leu, but may be other amino acids including Pro although not Arg or Lys, and Yaa may be Pro. Amino acid amides and methyl esters are also readily hydrolyzed, but rates on arylamides are exceedingly low.. It carries out the reaction Release of an N-terminal amino acid, preferentially leucine, but not glutamic or aspartic acids.. Presumably involved in the processing and regular turnover of intracellular proteins. Catalyzes the removal of unsubstituted N-terminal amino acids from various peptides. This Prochlorococcus marinus (strain SARG / CCMP1375 / SS120) protein is Probable cytosol aminopeptidase.